We begin with the raw amino-acid sequence, 61 residues long: Small ribosomal subunit protein uS14 (61 aa).

Positions 24, 27, 40, and 43 each coordinate Zn(2+).

This sequence belongs to the universal ribosomal protein uS14 family. Zinc-binding uS14 subfamily. As to quaternary structure, part of the 30S ribosomal subunit. Contacts proteins S3 and S10. It depends on Zn(2+) as a cofactor.

Binds 16S rRNA, required for the assembly of 30S particles and may also be responsible for determining the conformation of the 16S rRNA at the A site. This is Small ribosomal subunit protein uS14 from Geobacter metallireducens (strain ATCC 53774 / DSM 7210 / GS-15).